The primary structure comprises 201 residues: Ependymin-related protein 2 (201 aa).

An N-terminal signal peptide occupies residues 1 to 21; it reads MILQVVLLLACLSGAIVSTGA. N-linked (GlcNAc...) asparagine glycosylation is found at Asn-38 and Asn-137. The Microbody targeting signal signature appears at 199 to 201; sequence CRA.

Belongs to the ependymin family. In terms of tissue distribution, component of the acid-soluble and acid-insoluble organic matrix of calcified shell layers (at protein level).

Its subcellular location is the secreted. The polypeptide is Ependymin-related protein 2 (Haliotis asinina (Donkey's ear abalone)).